A 157-amino-acid polypeptide reads, in one-letter code: Cyclic pyranopterin monophosphate synthase (157 aa).

Substrate is bound by residues Met74–His76 and Met110–Glu111. Asp125 is a catalytic residue.

Belongs to the MoaC family. Homohexamer; trimer of dimers.

The enzyme catalyses (8S)-3',8-cyclo-7,8-dihydroguanosine 5'-triphosphate = cyclic pyranopterin phosphate + diphosphate. The protein operates within cofactor biosynthesis; molybdopterin biosynthesis. Functionally, catalyzes the conversion of (8S)-3',8-cyclo-7,8-dihydroguanosine 5'-triphosphate to cyclic pyranopterin monophosphate (cPMP). The polypeptide is Cyclic pyranopterin monophosphate synthase (Peptoclostridium acidaminophilum (Eubacterium acidaminophilum)).